A 353-amino-acid polypeptide reads, in one-letter code: Photosystem II D2 protein (353 aa).

An N-acetylthreonine modification is found at threonine 2. Threonine 2 is subject to Phosphothreonine. A helical membrane pass occupies residues cysteine 41–threonine 61. Histidine 118 serves as a coordination point for chlorophyll a. The chain crosses the membrane as a helical span at residues glycine 125–proline 141. 2 residues coordinate pheophytin a: glutamine 130 and asparagine 143. The helical transmembrane segment at valine 153–serine 166 threads the bilayer. Chlorophyll a is bound at residue histidine 198. The helical transmembrane segment at alanine 208–aspartate 228 threads the bilayer. The a plastoquinone site is built by histidine 215 and phenylalanine 262. Histidine 215 is a binding site for Fe cation. A Fe cation-binding site is contributed by histidine 269. Residues glycine 279–arginine 295 traverse the membrane as a helical segment.

Belongs to the reaction center PufL/M/PsbA/D family. As to quaternary structure, PSII is composed of 1 copy each of membrane proteins PsbA, PsbB, PsbC, PsbD, PsbE, PsbF, PsbH, PsbI, PsbJ, PsbK, PsbL, PsbM, PsbT, PsbX, PsbY, PsbZ, Psb30/Ycf12, at least 3 peripheral proteins of the oxygen-evolving complex and a large number of cofactors. It forms dimeric complexes. The D1/D2 heterodimer binds P680, chlorophylls that are the primary electron donor of PSII, and subsequent electron acceptors. It shares a non-heme iron and each subunit binds pheophytin, quinone, additional chlorophylls, carotenoids and lipids. There is also a Cl(-1) ion associated with D1 and D2, which is required for oxygen evolution. The PSII complex binds additional chlorophylls, carotenoids and specific lipids. serves as cofactor.

The protein localises to the plastid. It localises to the chloroplast thylakoid membrane. It carries out the reaction 2 a plastoquinone + 4 hnu + 2 H2O = 2 a plastoquinol + O2. Functionally, photosystem II (PSII) is a light-driven water:plastoquinone oxidoreductase that uses light energy to abstract electrons from H(2)O, generating O(2) and a proton gradient subsequently used for ATP formation. It consists of a core antenna complex that captures photons, and an electron transfer chain that converts photonic excitation into a charge separation. The D1/D2 (PsbA/PsbD) reaction center heterodimer binds P680, the primary electron donor of PSII as well as several subsequent electron acceptors. D2 is needed for assembly of a stable PSII complex. The sequence is that of Photosystem II D2 protein from Barbarea verna (Land cress).